A 363-amino-acid polypeptide reads, in one-letter code: Forkhead box protein I1 (363 aa).

Low complexity predominate over residues 1–18 (MNPVQQPAQQRSPASSLP). 3 disordered regions span residues 1–24 (MNPV…KRAQ), 210–269 (DNGN…SPPA), and 344–363 (TTAQ…QGRY). A DNA-binding region (fork-head) is located at residues 125–219 (RPPYSYSALI…DNGNFRRKRK (95 aa)). Residues 231–243 (KIGEDHLNPKGKE) are compositionally biased toward basic and acidic residues. Low complexity-rich tracts occupy residues 244-258 (SPPM…EPSP) and 347-363 (QKQP…QGRY).

It localises to the nucleus. Its function is as follows. Transcription factor. Essential for ventral specification of the early cephalic (head) ectoderm during gastrulation, playing a role in the 'non-neural' versus 'neural' cell fate choice. Binds to DNA via the target sequence 5'-[AG]TAAA[CT]A-3', with 5'-ATAAACA-3' being the preferred binding site. The sequence is that of Forkhead box protein I1 from Xenopus tropicalis (Western clawed frog).